A 546-amino-acid polypeptide reads, in one-letter code: CTP synthase (546 aa).

An amidoligase domain region spans residues 1 to 265 (MTKYVFVTGG…DEIVCHKLNI (265 aa)). Position 13 (serine 13) interacts with CTP. Position 13 (serine 13) interacts with UTP. Residues 14-19 (SLGKGI) and aspartate 71 each bind ATP. Residues aspartate 71 and glutamate 139 each contribute to the Mg(2+) site. Residues 146-148 (DIE), 186-191 (KTKPTQ), and lysine 222 each bind CTP. Residues 186–191 (KTKPTQ) and lysine 222 contribute to the UTP site. The Glutamine amidotransferase type-1 domain occupies 290 to 543 (KIAFVGKYVD…VKAALANQKA (254 aa)). Position 351 (glycine 351) interacts with L-glutamine. Cysteine 378 serves as the catalytic Nucleophile; for glutamine hydrolysis. Residues 379-382 (LGMQ), glutamate 402, and arginine 469 each bind L-glutamine. Active-site residues include histidine 516 and glutamate 518.

Belongs to the CTP synthase family. Homotetramer.

It catalyses the reaction UTP + L-glutamine + ATP + H2O = CTP + L-glutamate + ADP + phosphate + 2 H(+). The enzyme catalyses L-glutamine + H2O = L-glutamate + NH4(+). The catalysed reaction is UTP + NH4(+) + ATP = CTP + ADP + phosphate + 2 H(+). It functions in the pathway pyrimidine metabolism; CTP biosynthesis via de novo pathway; CTP from UDP: step 2/2. With respect to regulation, allosterically activated by GTP, when glutamine is the substrate; GTP has no effect on the reaction when ammonia is the substrate. The allosteric effector GTP functions by stabilizing the protein conformation that binds the tetrahedral intermediate(s) formed during glutamine hydrolysis. Inhibited by the product CTP, via allosteric rather than competitive inhibition. Catalyzes the ATP-dependent amination of UTP to CTP with either L-glutamine or ammonia as the source of nitrogen. Regulates intracellular CTP levels through interactions with the four ribonucleotide triphosphates. The sequence is that of CTP synthase from Dechloromonas aromatica (strain RCB).